Consider the following 363-residue polypeptide: Histidinol-phosphate aminotransferase (363 aa).

Residue lysine 226 is modified to N6-(pyridoxal phosphate)lysine.

Belongs to the class-II pyridoxal-phosphate-dependent aminotransferase family. Histidinol-phosphate aminotransferase subfamily. As to quaternary structure, homodimer. Pyridoxal 5'-phosphate is required as a cofactor.

It catalyses the reaction L-histidinol phosphate + 2-oxoglutarate = 3-(imidazol-4-yl)-2-oxopropyl phosphate + L-glutamate. It functions in the pathway amino-acid biosynthesis; L-histidine biosynthesis; L-histidine from 5-phospho-alpha-D-ribose 1-diphosphate: step 7/9. The polypeptide is Histidinol-phosphate aminotransferase (Campylobacter lari (strain RM2100 / D67 / ATCC BAA-1060)).